The chain runs to 108 residues: Replication restart protein PriB (108 aa).

Residues 8 to 108 (VDNRFSLIGK…LHAEQIEFIE (101 aa)) enclose the SSB domain.

This sequence belongs to the PriB family. In terms of assembly, homodimer. Interacts with PriA and DnaT. Component of the replication restart primosome. Primosome assembly occurs via a 'hand-off' mechanism. PriA binds to replication forks, subsequently PriB then DnaT bind; DnaT then displaces ssDNA to generate the helicase loading substrate.

Its function is as follows. Involved in the restart of stalled replication forks, which reloads the replicative helicase on sites other than the origin of replication; the PriA-PriB pathway is the major replication restart pathway. During primosome assembly it facilitates complex formation between PriA and DnaT on DNA; stabilizes PriA on DNA. Stimulates the DNA unwinding activity of PriA helicase. This Histophilus somni (strain 129Pt) (Haemophilus somnus) protein is Replication restart protein PriB.